The chain runs to 358 residues: Histidinol-phosphate aminotransferase (358 aa).

K218 carries the N6-(pyridoxal phosphate)lysine modification.

This sequence belongs to the class-II pyridoxal-phosphate-dependent aminotransferase family. Histidinol-phosphate aminotransferase subfamily. As to quaternary structure, homodimer. Pyridoxal 5'-phosphate is required as a cofactor.

The catalysed reaction is L-histidinol phosphate + 2-oxoglutarate = 3-(imidazol-4-yl)-2-oxopropyl phosphate + L-glutamate. It participates in amino-acid biosynthesis; L-histidine biosynthesis; L-histidine from 5-phospho-alpha-D-ribose 1-diphosphate: step 7/9. In Dehalococcoides mccartyi (strain CBDB1), this protein is Histidinol-phosphate aminotransferase.